The primary structure comprises 131 residues: Large ribosomal subunit protein bL17 (131 aa).

This sequence belongs to the bacterial ribosomal protein bL17 family. Part of the 50S ribosomal subunit. Contacts protein L32.

This chain is Large ribosomal subunit protein bL17, found in Shewanella violacea (strain JCM 10179 / CIP 106290 / LMG 19151 / DSS12).